A 432-amino-acid polypeptide reads, in one-letter code: Adenosylhomocysteinase (432 aa).

N-acetylserine is present on serine 2. Substrate contacts are provided by threonine 57, aspartate 131, and glutamate 156. Threonine 157 to threonine 159 is a binding site for NAD(+). The residue at position 183 (serine 183) is a Phosphoserine. 2 residues coordinate substrate: lysine 186 and aspartate 190. An N6-(2-hydroxyisobutyryl)lysine modification is found at lysine 186. Tyrosine 193 is modified (phosphotyrosine). Residues glycine 222 to glycine 227, glutamate 243, asparagine 248, isoleucine 299 to histidine 301, asparagine 346, and histidine 353 each bind NAD(+).

It belongs to the adenosylhomocysteinase family. In terms of assembly, homotetramer. Interaction with AHCYL1. The cofactor is NAD(+).

The protein resides in the cytoplasm. It localises to the melanosome. The protein localises to the nucleus. It is found in the endoplasmic reticulum. It carries out the reaction S-adenosyl-L-homocysteine + H2O = L-homocysteine + adenosine. Its pathway is amino-acid biosynthesis; L-homocysteine biosynthesis; L-homocysteine from S-adenosyl-L-homocysteine: step 1/1. In terms of biological role, catalyzes the hydrolysis of S-adenosyl-L-homocysteine to form adenosine and homocysteine. Binds copper ions. The chain is Adenosylhomocysteinase (AHCY) from Homo sapiens (Human).